The primary structure comprises 389 residues: Brix domain-containing protein C1B9.03c (389 aa).

Residues 28 to 309 (SMVIRSGASE…LIKITEDAMG (282 aa)) form the Brix domain. Residues 323–350 (EEIKQQDNFHEQSRALKEKRKKEQDENV) show a composition bias toward basic and acidic residues. A disordered region spans residues 323–389 (EEIKQQDNFH…EGSSAYSDTE (67 aa)). Positions 351–362 (RRKRENKKRRKD) are enriched in basic residues. Ser377 bears the Phosphoserine mark. Residues 379–389 (NEGSSAYSDTE) are compositionally biased toward polar residues.

The chain is Brix domain-containing protein C1B9.03c from Schizosaccharomyces pombe (strain 972 / ATCC 24843) (Fission yeast).